The sequence spans 376 residues: Tetraacyldisaccharide 4'-kinase (376 aa).

Residue 51–58 (AVGGTGKT) coordinates ATP.

The protein belongs to the LpxK family.

The enzyme catalyses a lipid A disaccharide + ATP = a lipid IVA + ADP + H(+). It participates in glycolipid biosynthesis; lipid IV(A) biosynthesis; lipid IV(A) from (3R)-3-hydroxytetradecanoyl-[acyl-carrier-protein] and UDP-N-acetyl-alpha-D-glucosamine: step 6/6. Functionally, transfers the gamma-phosphate of ATP to the 4'-position of a tetraacyldisaccharide 1-phosphate intermediate (termed DS-1-P) to form tetraacyldisaccharide 1,4'-bis-phosphate (lipid IVA). The protein is Tetraacyldisaccharide 4'-kinase of Bacteroides fragilis (strain YCH46).